The sequence spans 354 residues: Peptide-N(4)-(N-acetyl-beta-D-glucosaminyl)asparagine amidase F (354 aa).

Positions 1-40 are cleaved as a signal peptide; that stretch reads MRKLLIFSISAYLMAGIVSCKGVDSATPVTEDRLALNAVN. The cysteines at positions 91 and 96 are disulfide-linked. Catalysis depends on residues Asp-100, Glu-158, and Glu-246. 2 cysteine pairs are disulfide-bonded: Cys-244-Cys-248 and Cys-271-Cys-292.

Monomer.

The catalysed reaction is Hydrolysis of an N(4)-(acetyl-beta-D-glucosaminyl)asparagine residue in which the glucosamine residue may be further glycosylated, to yield a (substituted) N-acetyl-beta-D-glucosaminylamine and a peptide containing an aspartate residue.. Functionally, cleaves an entire glycan from a glycoprotein. Requires that the glycosylated asparagine moiety (reaction 1) be substituted on its amino (R1) and carboxyl (R2) terminus with a polypeptide chain. The sequence is that of Peptide-N(4)-(N-acetyl-beta-D-glucosaminyl)asparagine amidase F (ngl) from Elizabethkingia miricola (Chryseobacterium miricola).